We begin with the raw amino-acid sequence, 254 residues long: uncharacterized protein (254 aa).

Residues Ile-18, Ser-37, Asp-63, Asn-90, Tyr-159, Lys-163, Val-192, and Thr-194 each coordinate NADP(+). The Proton donor role is filled by Tyr-159. The active-site Lowers pKa of active site Tyr is Lys-163.

It belongs to the short-chain dehydrogenases/reductases (SDR) family.

The protein localises to the cytoplasm. It localises to the nucleus. This is an uncharacterized protein from Schizosaccharomyces pombe (strain 972 / ATCC 24843) (Fission yeast).